The chain runs to 956 residues: Golgin candidate 5 (956 aa).

Disordered regions lie at residues 70-230 and 278-298; these read MSFM…QHKI and IFES…SSDE. 2 stretches are compositionally biased toward basic and acidic residues: residues 77–89 and 118–129; these read SDEK…DSVR and ANKETNVRREAD. 2 stretches are compositionally biased toward polar residues: residues 160–177 and 184–193; these read EYSL…SLQP and TASQDSQPEQ. Over residues 206-219 the composition is skewed to basic and acidic residues; that stretch reads SEAKEVTVENKDTV. The stretch at 333–765 forms a coiled coil; the sequence is SDSADVILEL…LIQKDLEREK (433 aa). Residue serine 793 is modified to Phosphoserine. A coiled-coil region spans residues 851–951; sequence SAYEATLRQK…EMYREQVNML (101 aa).

In terms of assembly, interacts with RABH1B and RABH1C, but not with RABD1 or RABD2A.

The protein localises to the golgi apparatus. It is found in the cytoplasm. In terms of biological role, golgi matrix protein playing a role in tethering of vesicles to Golgi membranes and in maintaining the overall structure of the Golgi apparatus. The chain is Golgin candidate 5 (GC5) from Arabidopsis thaliana (Mouse-ear cress).